Here is a 287-residue protein sequence, read N- to C-terminus: Transmembrane protein 163 (287 aa).

Positions Met1–Glu63 are disordered. Over Met1–Ala86 the chain is Cytoplasmic. A phosphoserine mark is found at Ser11, Ser53, Ser55, and Ser59. The tract at residues Glu40–Ser70 is required for interaction with MCOLN1. Residues Leu87–Val107 form a helical membrane-spanning segment. Residues Ser108–Ala114 lie on the Extracellular side of the membrane. The chain crosses the membrane as a helical span at residues Ser115 to Trp135. Topologically, residues Arg136–Arg148 are cytoplasmic. The helical transmembrane segment at Glu149–Val169 threads the bilayer. Residues Lys170 to Asp185 lie on the Extracellular side of the membrane. A helical membrane pass occupies residues Phe186 to Phe206. Residues Met207 to Arg215 lie on the Cytoplasmic side of the membrane. A helical transmembrane segment spans residues Ala216–Leu236. The Extracellular portion of the chain corresponds to Ser237–Ser253. A helical membrane pass occupies residues Ile254–Val274. Over Pro275–Glu287 the chain is Cytoplasmic.

The protein belongs to the TMEM163 family. As to quaternary structure, homodimer. Interacts with MCOLN1/TRPML1. Interacts with SLC30A1, SLC30A2, SLC30A3 and SLC30A4.

It localises to the cytoplasmic vesicle. It is found in the secretory vesicle. Its subcellular location is the synaptic vesicle membrane. The protein resides in the early endosome membrane. The protein localises to the late endosome membrane. It localises to the lysosome membrane. It is found in the cell membrane. It catalyses the reaction Zn(2+)(in) = Zn(2+)(out). In terms of biological role, zinc ion transporter that mediates zinc efflux and plays a crucial role in intracellular zinc homeostasis. Binds the divalent cations Zn(2+), Ni(2+), and to a minor extent Cu(2+). Is a functional modulator of P2X purinoceptors, including P2RX1, P2RX3, P2RX4 and P2RX7. Plays a role in central nervous system development and is required for myelination, and survival and proliferation of oligodendrocytes. The sequence is that of Transmembrane protein 163 (TMEM163) from Bos taurus (Bovine).